The following is a 633-amino-acid chain: DNA mismatch repair protein MutL (633 aa).

Disordered regions lie at residues 336–364 (VRPD…GEFG) and 384–405 (GWSG…TRPE). Positions 388–401 (GASSSGASSGYSAY) are enriched in low complexity.

It belongs to the DNA mismatch repair MutL/HexB family.

Its function is as follows. This protein is involved in the repair of mismatches in DNA. It is required for dam-dependent methyl-directed DNA mismatch repair. May act as a 'molecular matchmaker', a protein that promotes the formation of a stable complex between two or more DNA-binding proteins in an ATP-dependent manner without itself being part of a final effector complex. This chain is DNA mismatch repair protein MutL, found in Pseudomonas paraeruginosa (strain DSM 24068 / PA7) (Pseudomonas aeruginosa (strain PA7)).